Here is a 248-residue protein sequence, read N- to C-terminus: Probable capsular polysaccharide biosynthesis protein YwqC (248 aa).

2 consecutive transmembrane segments (helical) span residues 18-38 (ILLI…ISFF) and 174-194 (LLNI…LAFL).

Belongs to the CpsC/CapA family. In terms of processing, not phosphorylated in vitro by YwqD.

The protein localises to the cell membrane. Its pathway is capsule biogenesis; capsule polysaccharide biosynthesis. Functionally, required for YwqD kinase activity. May bring YwqD and its substrates into contact. Probably involved in the regulation of capsular polysaccharide biosynthesis. In Bacillus subtilis (strain 168), this protein is Probable capsular polysaccharide biosynthesis protein YwqC (ywqC).